Here is a 196-residue protein sequence, read N- to C-terminus: Calcium channel flower (196 aa).

A run of 3 helical transmembrane segments spans residues 36-56 (LGIV…LSII), 67-89 (IIQM…ICIE), and 114-134 (AVPP…GLIF).

This sequence belongs to the calcium channel flower family. In terms of assembly, homomultimer. Associates with the dally/ magu complex.

It is found in the cell membrane. The protein resides in the cytoplasmic vesicle. Its subcellular location is the secretory vesicle. The protein localises to the synaptic vesicle membrane. It localises to the presynaptic cell membrane. It is found in the endosome. With respect to regulation, channel activity is inhibited by La(3+), which reduces Ca(2+) influx and thus inhibits it's function in promoting activity-dependent bulk endocytosis (ADBE) in response to high stimuli. Functionally, transmembrane protein which mediates synaptic endocytosis, fitness-based cell culling, neuronal culling, morphogen gradient scaling, and calcium transport. Regulates synaptic endocytosis and hence couples exo- with endocytosis. Controls two major modes of synaptic vesicle (SV) endocytosis in the synaptic boutons of neuromuscular junctions (NMJs); Ca(2+) channel-independent Clathrin-mediated endocytosis (CME) in response to mild stimulation, and Ca(2+) channel-dependent activity-dependent bulk endocytosis (ADBE) in response to strong stimulation. Functions in ADBE and subsequent SV reformation from bulk endosomes by initiating Ca(2+) channel-dependent phosphatidylinositol 4,5-bisphosphate (PtdIns(4,5)P2) compartmentalization in synaptic boutons. There it acts at the periactive zone to provide the low Ca(2+) levels required to initiate Calcineurin activation and upregulate PtdIns(4,5)P2. Conversely PtdIns(4,5)P2 enhances fwe Ca(2+) channel-activity, establishing a positive feedback loop that induces PtdIns(4,5)P2 microdomain at the periactive zone. These microdomains trigger bulk membrane invagination (i.e. ADBE) by triggering actin polymerization while also promoting localization of fwe to bulk endosomes, thereby removing the ADBE trigger to reduce endocytosis and prevent excess membrane uptake. PtdIns(4,5)P2 then promotes SV reformation from the bulk endosomes, to coordinate ADBE and subsequent SV reformation. Different combinations of the flower isoforms at the cell membrane are also required for the identification and elimination of suboptimal or supernumerary cells during development, regeneration, and adulthood. Required for the recognition and elimination of unfit cells in the developing wing during cell competition. In the developing pupal retina, mediates the elimination of unwanted postmitotic neurons, including supernumerary photoreceptor neurons that form at the periphery of the retina and are contained within incomplete ommatidia units. Also required for efficient elimination and replacement of old neurons by newly generated neurons during regeneration in the adult brain following mechanical injury. Downstream of the flower fitness fingerprints, cells identified as unwanted or unfit are eliminated via apoptosis through the expression of ahuizotl (azot). However, the cells marked for elimination by the flower isoforms only undergo apoptosis if additional thresholds are met; (1) their neighboring fit/healthy cells express different levels of the fwe isoforms, and (2) the levels of the protective signal SPARC expressed by the loser or unwanted cells are unable to inhibit caspase activation. These additional thresholds for flower-mediated apoptosis, allows useful cells to recover from transient and limited stress before they are unnecessarily eliminated. Functions with dally and magu in a mechanism of scaling, which utilises apoptosis to ensure that the dpp morphogen gradient, which mediates organ growth, remains proportional to the size of the growing wing. In this mechanism, fwe represses dally- and Magu-dependent activity in expanding the gradient, and dally/Magu inhibits fwe-dependent apoptosis to keep cell death rate low. When the levels of these different proteins are optimally regulated the gradient correctly scales with organ growth but when this fails, fwe-mediated apoptosis is activated to trim the developing tissue to match the correct size of the gradient. The protein is Calcium channel flower of Drosophila virilis (Fruit fly).